Consider the following 857-residue polypeptide: Potassium channel AKT1 (857 aa).

Residues 1-61 (MRGGALLCGQ…PYDHKYRIWE (61 aa)) lie on the Cytoplasmic side of the membrane. Residues 62 to 82 (AFLVVLVVYTAWVSPFEFGFL) form a helical membrane-spanning segment. Topologically, residues 83–90 (RKPRPPLS) are extracellular. The chain crosses the membrane as a helical span at residues 91 to 111 (ITDNIVNAFFAIDIIMTFFVG). The Cytoplasmic segment spans residues 112-134 (YLDKSTYLIVDDRKQIAFKYLRS). The chain crosses the membrane as a helical span at residues 135 to 155 (WFLLDLVSTIPSEAAMRISSQ). At 156–158 (SYG) the chain is on the extracellular side. A helical; Voltage-sensor transmembrane segment spans residues 159 to 179 (LFNMLRLWRLRRVGALFARLE). Residues 180–193 (KDRNFNYFWVRCAK) are Cytoplasmic-facing. The chain crosses the membrane as a helical span at residues 194–214 (LVCVTLFAVHCAACFYYLIAA). Residues 215 to 241 (RNSNPAKTWIGANVANFLEESLWMRYV) lie on the Extracellular side of the membrane. The segment at residues 242-261 (TSMYWSITTLTTVGYGDLHP) is an intramembrane region (pore-forming). Over 262 to 265 (VNTK) the chain is Extracellular. Residues 266-286 (EMIFDIFYMLFNLGLTAYLIG) traverse the membrane as a helical segment. At 287–857 (NMTNLVVHGT…GDHLIFATDS (571 aa)) the chain is on the cytoplasmic side. A nucleoside 3',5'-cyclic phosphate is bound at residue 372 to 493 (LFRGVSNDLL…IMNNLLQHLK (122 aa)). ANK repeat units lie at residues 515-546 (KMDL…DPNE), 550-579 (NGRT…DPNC), 583-612 (EGSV…TIDA), 614-643 (DVGH…DVTR), 647-676 (TGTS…DVNK), and 680-709 (HGWT…ERRV). In terms of domain architecture, KHA spans 790–857 (RVTISCAEKD…GDHLIFATDS (68 aa)).

This sequence belongs to the potassium channel family. Plant (TC 1.A.1.4) subfamily. As to quaternary structure, the potassium channel is probably composed of a homo- or heterotetrameric complex of pore-forming subunits. Possible heteromultimer with AKT2 or KAT3. Part of a K(+)-channel calcium-sensing kinase/phosphatase complex composed by a calcium sensor CBL (CBL1, CBL2, CBL3 or CBL9), a kinase CIPK (CIPK6, CIPK16 or CIPK23), a phosphatase PP2C (AIP1) and a K(+)-channel (AKT1). Interacts directly with AIP1, CBL10, CIPK6, CIPK16 and CIPK23. Phosphorylated by CIPK proteins CIPK6, CIPK16 and CIPK23. The activation by phosphorylation is induced by low K(+) conditions and stimulates K(+) uptake and relocation. Dephosphorylation by AIP1 repressed the transport activity. Preferentially expressed in the peripheral cell layers of root mature including root cortex and root hairs. Detected also, at a lower level, in the mesophyll of the leaves and at restricted sites corresponding to hydathodes and guard cells.

Its subcellular location is the cell membrane. Highly selective inward-rectifying potassium channel that mediate potassium uptake by plant roots in response to low K(+) conditions, by a calcium-, CBL-, and CIPK-dependent pathway. Positively regulated by phosphorylation by CIPK23. Negatively regulated by a kinase-independent regulatory mechanism involving a competing direct binding of CBL10. Involved in the stomatal regulation by monitoring the turgor pressure in guard cells. Assuming opened or closed conformations in response to the voltage difference across the membrane, the channel is activated by hyperpolarization. May interact with the cytoskeleton or with regulatory proteins. Is essential with POT5/HAK5 for high-affinity potassium uptake in roots during seedling establishment and postgermination growth under low potassium conditions. This chain is Potassium channel AKT1 (AKT1), found in Arabidopsis thaliana (Mouse-ear cress).